The chain runs to 258 residues: Isoprenyl transferase 2 (258 aa).

Asp35 is a catalytic residue. Asp35 contributes to the Mg(2+) binding site. Substrate is bound by residues 36-39 (GNRR), Trp40, Arg50, and 81-83 (SDD). The active-site Proton acceptor is the Asn84. Substrate contacts are provided by residues Arg87, Arg207, and 213 to 215 (RLS). Residue Glu226 participates in Mg(2+) binding.

The protein belongs to the UPP synthase family. As to quaternary structure, homodimer. Requires Mg(2+) as cofactor.

Functionally, catalyzes the condensation of isopentenyl diphosphate (IPP) with allylic pyrophosphates generating different type of terpenoids. The sequence is that of Isoprenyl transferase 2 from Streptomyces coelicolor (strain ATCC BAA-471 / A3(2) / M145).